We begin with the raw amino-acid sequence, 368 residues long: UPF0284 protein SYNPCC7002_A1742 (368 aa).

Belongs to the UPF0284 family.

The sequence is that of UPF0284 protein SYNPCC7002_A1742 from Picosynechococcus sp. (strain ATCC 27264 / PCC 7002 / PR-6) (Agmenellum quadruplicatum).